The chain runs to 309 residues: Partitioning defective protein 6 (309 aa).

Residues 14-96 (TLQVKSKFDS…PLLRLLIQRR (83 aa)) form the PB1 domain. The Pseudo-CRIB domain occupies 132 to 149 (ISNPEDFRQVSAIIDVDI). The PDZ domain maps to 156–249 (RVRLCKHGQE…NLIITVKPAN (94 aa)). The span at 249 to 270 (NQRNTLSRGPSQQGTPNASEMS) shows a compositional bias: polar residues. Positions 249-309 (NQRNTLSRGP…DANDSDSGED (61 aa)) are disordered.

This sequence belongs to the PAR6 family. Interacts with par-3, required for its peripheral localization, and with cdc-42, required for the activation of a par-3/par-6/pkc-3 complex. Colocalized with par-3 at all stages in early embryos, at the anterior cortex of the embryo. Patchy expression observed at the periphery after completion of meiosis I and in meiosis II, which on completion of metaphase II, is restricted to the anterior 85% of embryo length; this decreases to 55% in embryos between prophase and telophase of the first mitosis. During the first cleavage, expression is detected in the advancing furrow. Along with pkc-3, is unable to associate with the apical cortex of cells that lack par-3. Transiently coexpressed and colocalized with par-3 and pkc-3, asymmetrically in the developing somatic gonad, including the spermathecal precursor cells of L4 larvae.

It localises to the cytoplasm. It is found in the cell membrane. The protein localises to the cell junction. The protein resides in the tight junction. In terms of biological role, necessary for apicobasal and anterior-posterior asymmetries associated with cell adhesion and gastrulation during the first few cell cycles of embryogenesis. Required for localizing/ maintaining par-3 at the cell periphery. Regulates mes-1 expression and/or localization pattern during early embryogenesis. Acts together with par-3 and pkc-3 in maintaining epithelial cell polarity in the distal spermatheca. Plays a role in endosome and Golgi body positioning. This Caenorhabditis elegans protein is Partitioning defective protein 6.